The chain runs to 444 residues: UPF0053 protein YhdP (444 aa).

In terms of domain architecture, CNNM transmembrane spans 1 to 201 (MDIVNLILVA…YKSGEINQSE (201 aa)). The next 3 membrane-spanning stretches (helical) occupy residues 7–27 (ILVA…FAII), 61–81 (ACQL…ESTI), and 101–121 (VISF…VGEL). CBS domains lie at 220-282 (MIPR…SVDS) and 284-344 (ISQF…IRDE).

This sequence belongs to the UPF0053 family.

The protein localises to the cell membrane. This is UPF0053 protein YhdP (yhdP) from Bacillus subtilis (strain 168).